The following is a 156-amino-acid chain: Large ribosomal subunit protein uL30 (156 aa).

This sequence belongs to the universal ribosomal protein uL30 family. As to quaternary structure, part of the 50S ribosomal subunit.

This chain is Large ribosomal subunit protein uL30, found in Thermofilum pendens (strain DSM 2475 / Hrk 5).